Consider the following 618-residue polypeptide: Glucose starvation modulator protein 1 (618 aa).

The segment at residues 20–48 (CEFCHTKHIQCDVGRPCQNCLKRNIGKFC) is a DNA-binding region (zn(2)-C6 fungal-type). Residues 325 to 352 (ANANTHPSHNAKLESECDSSSHSDADLE) form a disordered region. Residues 335–352 (AKLESECDSSSHSDADLE) are compositionally biased toward basic and acidic residues. The region spanning 466-538 (LLDLENMAKL…QIFNELLAFG (73 aa)) is the PAS domain.

Belongs to the ERT1/acuK family.

The protein resides in the nucleus. Transcription factor which regulates nonfermentable carbon utilization. Binds specifically to 5'-CGGN(8)CGG-3' and 5'-CGGN(9)CGG-3' sequences in the promoter region. The sequence is that of Glucose starvation modulator protein 1 (GSM1) from Saccharomyces cerevisiae (strain ATCC 204508 / S288c) (Baker's yeast).